The following is a 595-amino-acid chain: Flap endonuclease 1 (595 aa).

Positions Met-1–Arg-106 are N-domain. Asp-34 is a Mg(2+) binding site. DNA contacts are provided by Arg-47 and Arg-72. Positions 88, 160, 162, 181, and 183 each coordinate Mg(2+). Residues Glu-124–Tyr-267 are I-domain. Glu-160 contributes to the DNA binding site. The DNA site is built by Gly-245 and Asp-247. Asp-247 contacts Mg(2+). The interval Thr-350–Phe-358 is interaction with PCNA. The interval Asn-370–Gly-493 is disordered. Residues Asn-392–Lys-401 are compositionally biased toward polar residues. Residues Pro-406–Asn-425 show a composition bias toward basic and acidic residues. Positions Asp-426–Thr-436 are enriched in acidic residues. The span at His-461–Thr-475 shows a compositional bias: basic and acidic residues.

The protein belongs to the XPG/RAD2 endonuclease family. FEN1 subfamily. As to quaternary structure, interacts with PCNA. Three molecules of FEN1 bind to one PCNA trimer with each molecule binding to one PCNA monomer. PCNA stimulates the nuclease activity without altering cleavage specificity. The cofactor is Mg(2+). Post-translationally, phosphorylated. Phosphorylation upon DNA damage induces relocalization to the nuclear plasma.

The protein localises to the nucleus. It localises to the nucleolus. The protein resides in the nucleoplasm. It is found in the mitochondrion. Its function is as follows. Structure-specific nuclease with 5'-flap endonuclease and 5'-3' exonuclease activities involved in DNA replication and repair. During DNA replication, cleaves the 5'-overhanging flap structure that is generated by displacement synthesis when DNA polymerase encounters the 5'-end of a downstream Okazaki fragment. It enters the flap from the 5'-end and then tracks to cleave the flap base, leaving a nick for ligation. Also involved in the long patch base excision repair (LP-BER) pathway, by cleaving within the apurinic/apyrimidinic (AP) site-terminated flap. Acts as a genome stabilization factor that prevents flaps from equilibrating into structures that lead to duplications and deletions. Also possesses 5'-3' exonuclease activity on nicked or gapped double-stranded DNA, and exhibits RNase H activity. Also involved in replication and repair of rDNA and in repairing mitochondrial DNA. The polypeptide is Flap endonuclease 1 (Plasmodium knowlesi (strain H)).